The primary structure comprises 917 residues: Methionine--tRNA ligase, cytoplasmic (917 aa).

Positions P44–N54 match the 'HIGH' region motif. The 'KMSKS' region signature appears at K367–S371. K370 lines the ATP pocket. Disordered regions lie at residues G591 to K623 and S702 to A749. The span at P614–K623 shows a compositional bias: basic and acidic residues. Residues S702–S713 show a composition bias toward low complexity. The segment covering E732–K741 has biased composition (basic and acidic residues). In terms of domain architecture, tRNA-binding spans D756–V857.

It belongs to the class-I aminoacyl-tRNA synthetase family.

The protein resides in the cytoplasm. It carries out the reaction tRNA(Met) + L-methionine + ATP = L-methionyl-tRNA(Met) + AMP + diphosphate. This is Methionine--tRNA ligase, cytoplasmic from Caenorhabditis elegans.